The following is a 380-amino-acid chain: Queuine tRNA-ribosyltransferase (380 aa).

The active-site Proton acceptor is D96. Substrate-binding positions include 96 to 100, D150, Q193, and G220; that span reads DSGGF. Positions 251-257 are RNA binding; sequence GVGAPDS. Catalysis depends on D270, which acts as the Nucleophile. The interval 275–279 is RNA binding; important for wobble base 34 recognition; sequence TRIAR. The Zn(2+) site is built by C308, C310, C313, and H339.

This sequence belongs to the queuine tRNA-ribosyltransferase family. In terms of assembly, homodimer. Within each dimer, one monomer is responsible for RNA recognition and catalysis, while the other monomer binds to the replacement base PreQ1. It depends on Zn(2+) as a cofactor.

It catalyses the reaction 7-aminomethyl-7-carbaguanine + guanosine(34) in tRNA = 7-aminomethyl-7-carbaguanosine(34) in tRNA + guanine. Its pathway is tRNA modification; tRNA-queuosine biosynthesis. Its function is as follows. Catalyzes the base-exchange of a guanine (G) residue with the queuine precursor 7-aminomethyl-7-deazaguanine (PreQ1) at position 34 (anticodon wobble position) in tRNAs with GU(N) anticodons (tRNA-Asp, -Asn, -His and -Tyr). Catalysis occurs through a double-displacement mechanism. The nucleophile active site attacks the C1' of nucleotide 34 to detach the guanine base from the RNA, forming a covalent enzyme-RNA intermediate. The proton acceptor active site deprotonates the incoming PreQ1, allowing a nucleophilic attack on the C1' of the ribose to form the product. After dissociation, two additional enzymatic reactions on the tRNA convert PreQ1 to queuine (Q), resulting in the hypermodified nucleoside queuosine (7-(((4,5-cis-dihydroxy-2-cyclopenten-1-yl)amino)methyl)-7-deazaguanosine). The protein is Queuine tRNA-ribosyltransferase of Streptococcus pneumoniae (strain P1031).